The primary structure comprises 223 residues: Lipoprotein-releasing system ATP-binding protein LolD (223 aa).

The ABC transporter domain maps to 2 to 223 (IQVRNLKKTF…LRDGEIVTCA (222 aa)). 38 to 45 (GVSGAGKT) contributes to the ATP binding site.

The protein belongs to the ABC transporter superfamily. Lipoprotein translocase (TC 3.A.1.125) family. The complex is composed of two ATP-binding proteins (LolD) and two transmembrane proteins (LolC and LolE).

Its subcellular location is the cell inner membrane. Its function is as follows. Part of the ABC transporter complex LolCDE involved in the translocation of mature outer membrane-directed lipoproteins, from the inner membrane to the periplasmic chaperone, LolA. Responsible for the formation of the LolA-lipoprotein complex in an ATP-dependent manner. The sequence is that of Lipoprotein-releasing system ATP-binding protein LolD from Syntrophus aciditrophicus (strain SB).